The primary structure comprises 675 residues: 1,4-alpha-glucan branching enzyme TK1436 (675 aa).

Residue Glu183 is the Nucleophile of the active site. Positions 261 and 278 each coordinate substrate. Asp354 functions as the Proton donor in the catalytic mechanism. Positions 407, 467, and 476 each coordinate substrate. Disordered regions lie at residues 537–563 (PELE…KVLT) and 581–627 (EETR…LSIK). Composition is skewed to basic and acidic residues over residues 549–563 (PPEK…KVLT) and 581–595 (EETR…EASK). Over residues 596 to 616 (RGKRKSSKSKRLPRKVSKKAP) the composition is skewed to basic residues.

This sequence belongs to the glycosyl hydrolase 57 family. In terms of assembly, monomer.

The enzyme catalyses Transfers a segment of a (1-&gt;4)-alpha-D-glucan chain to a primary hydroxy group in a similar glucan chain.. Functionally, catalyzes the formation of branch points in alpha-glucans by cleavage of an alpha-1,4 glycosidic bond and subsequent transfer of the cleaved-off oligosaccharide to a new alpha-1,6 position. The branch chain-length distribution of the reaction products shows degree of polymerization (DP) of 5 to 30, with two local maxima at DP 6 and DP 11. Exhibits an alpha-retaining catalytic mechanism. Does not display alpha-galactosidase or pullulanase activity, since melibiose and pullulan are not substrates. Is not able to catalyze the hydrolysis or transglycosylation of maltoheptaose, suggesting that the TK1436 protein contains neither alpha-amylase nor 4-alpha-glucanotransferase activity. In Thermococcus kodakarensis (strain ATCC BAA-918 / JCM 12380 / KOD1) (Pyrococcus kodakaraensis (strain KOD1)), this protein is 1,4-alpha-glucan branching enzyme TK1436.